Reading from the N-terminus, the 398-residue chain is MQNYLTPNFAFAPMIPERASGSRVWDTKGREYIDFSGGIAVNALGHCHPALVDALNAQMHKLWHISNIYTTRPAQELAQKLVANSFADKVFFCNSGSEANEAALKLARKYARDRFGGGKSEIVACINSFHGRTLFTVSVGGQPKYSKDYAPLPQGITHVPFNDIAALEAAVGEQTCAVIIEPIQGESGILPATAEYLQTARRLCDRHNALLILDEVQTGMGHTGRLFAYEHYGIVPDILSSAKALGCGFPIGAMLATEKIAAAFQPGTHGSTFGGNPMACAVGSRAFDIINTPETLNHVREQGQKLQTALLDLCRKTGLFSQVRGMGLLLGCVLDEAYRGRASEITAAALKHGVMILVAGADVLRFAPSLLLNDEDMAEGLRRLEHALTEFAATSDNP.

Phe129 serves as a coordination point for pyridoxal 5'-phosphate. N(2)-acetyl-L-ornithine is bound at residue Arg132. Position 214-217 (214-217 (DEVQ)) interacts with pyridoxal 5'-phosphate. At Lys243 the chain carries N6-(pyridoxal phosphate)lysine. Ser271 lines the N(2)-acetyl-L-ornithine pocket. A pyridoxal 5'-phosphate-binding site is contributed by Thr272.

The protein belongs to the class-III pyridoxal-phosphate-dependent aminotransferase family. ArgD subfamily. In terms of assembly, homodimer. Pyridoxal 5'-phosphate is required as a cofactor.

The protein localises to the cytoplasm. It catalyses the reaction N(2)-acetyl-L-ornithine + 2-oxoglutarate = N-acetyl-L-glutamate 5-semialdehyde + L-glutamate. Its pathway is amino-acid biosynthesis; L-arginine biosynthesis; N(2)-acetyl-L-ornithine from L-glutamate: step 4/4. The sequence is that of Acetylornithine aminotransferase from Neisseria meningitidis serogroup B (strain ATCC BAA-335 / MC58).